A 131-amino-acid chain; its full sequence is UPF0344 protein Sca_0577 (131 aa).

Transmembrane regions (helical) follow at residues 1-21, 42-62, 69-89, and 99-119; these read MLHL…VSYI, LFLV…FATA, LLTL…VTLV, and GLFW…IILP.

This sequence belongs to the UPF0344 family.

Its subcellular location is the cell membrane. The polypeptide is UPF0344 protein Sca_0577 (Staphylococcus carnosus (strain TM300)).